We begin with the raw amino-acid sequence, 361 residues long: RNA 3'-terminal phosphate cyclase (361 aa).

ATP is bound by residues glutamine 109 and 293 to 297 (HLADQ). The active-site Tele-AMP-histidine intermediate is the histidine 319.

This sequence belongs to the RNA 3'-terminal cyclase family. Type 1 subfamily.

The protein resides in the cytoplasm. The enzyme catalyses a 3'-end 3'-phospho-ribonucleotide-RNA + ATP = a 3'-end 2',3'-cyclophospho-ribonucleotide-RNA + AMP + diphosphate. Its function is as follows. Catalyzes the conversion of 3'-phosphate to a 2',3'-cyclic phosphodiester at the end of RNA. The mechanism of action of the enzyme occurs in 3 steps: (A) adenylation of the enzyme by ATP; (B) transfer of adenylate to an RNA-N3'P to produce RNA-N3'PP5'A; (C) and attack of the adjacent 2'-hydroxyl on the 3'-phosphorus in the diester linkage to produce the cyclic end product. The biological role of this enzyme is unknown but it is likely to function in some aspects of cellular RNA processing. In Methylococcus capsulatus (strain ATCC 33009 / NCIMB 11132 / Bath), this protein is RNA 3'-terminal phosphate cyclase.